Consider the following 361-residue polypeptide: Rhomboid domain-containing protein 2 (361 aa).

5 consecutive transmembrane segments (helical) span residues 19 to 39 (SATF…LFLL), 63 to 83 (LVTY…AIII), 100 to 120 (CFFT…FESV), 158 to 178 (FGVV…SWLI), and 182 to 202 (SFLS…TYCY). 2 disordered regions span residues 265–287 (PSYP…PPGH) and 318–361 (PASA…VAMP). Composition is skewed to polar residues over residues 267–276 (YPVTQMQHAS) and 318–328 (PASAGTSQGVQ).

This sequence belongs to the peptidase S54 family. As to quaternary structure, might form homotrimers; these trimers are only formed in retina. Widely expressed, including in retina and brain (at protein level), as well as in kidney, testis and ovary. Expressed in all layers of the retina, including inner segments of photoreceptor cells and ganglion cells (at protein level).

Its subcellular location is the golgi apparatus. It localises to the cis-Golgi network membrane. This is Rhomboid domain-containing protein 2 (Rhbdd2) from Mus musculus (Mouse).